Here is a 400-residue protein sequence, read N- to C-terminus: Phosphoglycerate kinase (400 aa).

Substrate is bound by residues 24 to 26 (DFN), arginine 39, 62 to 65 (HFGR), arginine 121, and arginine 154. ATP is bound by residues lysine 205, glycine 296, glutamate 327, and 356–359 (GGDS).

The protein belongs to the phosphoglycerate kinase family. As to quaternary structure, monomer.

The protein resides in the cytoplasm. The catalysed reaction is (2R)-3-phosphoglycerate + ATP = (2R)-3-phospho-glyceroyl phosphate + ADP. The protein operates within carbohydrate degradation; glycolysis; pyruvate from D-glyceraldehyde 3-phosphate: step 2/5. The chain is Phosphoglycerate kinase from Rippkaea orientalis (strain PCC 8801 / RF-1) (Cyanothece sp. (strain PCC 8801)).